The following is a 780-amino-acid chain: 5-methyltetrahydropteroyltriglutamate--homocysteine methyltransferase (780 aa).

5-methyltetrahydropteroyltri-L-glutamate is bound by residues 15 to 18 and K114; that span reads RELK. Residues 457-459 and E510 contribute to the L-homocysteine site; that span reads IGS. L-methionine contacts are provided by residues 457–459 and E510; that span reads IGS. Residues 541–542 and W587 each bind 5-methyltetrahydropteroyltri-L-glutamate; that span reads RC. Residue D625 participates in L-homocysteine binding. L-methionine is bound at residue D625. E631 lines the 5-methyltetrahydropteroyltri-L-glutamate pocket. Zn(2+)-binding residues include H667, C669, and E691. The active-site Proton donor is the H720. C752 contacts Zn(2+).

The protein belongs to the vitamin-B12 independent methionine synthase family. Requires Zn(2+) as cofactor.

It carries out the reaction 5-methyltetrahydropteroyltri-L-glutamate + L-homocysteine = tetrahydropteroyltri-L-glutamate + L-methionine. Its pathway is amino-acid biosynthesis; L-methionine biosynthesis via de novo pathway; L-methionine from L-homocysteine (MetE route): step 1/1. Its function is as follows. Catalyzes the transfer of a methyl group from 5-methyltetrahydrofolate to homocysteine resulting in methionine formation. The chain is 5-methyltetrahydropteroyltriglutamate--homocysteine methyltransferase from Nitratidesulfovibrio vulgaris (strain DSM 19637 / Miyazaki F) (Desulfovibrio vulgaris).